The sequence spans 613 residues: Probable LRR receptor-like serine/threonine-protein kinase At5g10290 (613 aa).

The first 31 residues, 1–31 (MRMFSLQKMAMAFTLLFFACLCSFVSPDAQG), serve as a signal peptide directing secretion. The Extracellular portion of the chain corresponds to 32 to 225 (DALFALRISL…SGDSSKPKTG (194 aa)). Residues Asn81 and Asn116 are each glycosylated (N-linked (GlcNAc...) asparagine). LRR repeat units follow at residues 95–117 (NLKT…FGNL), 119–141 (SLTS…IGNL), 143–166 (KLQF…TGLP), and 167–189 (NLLN…LFEI). The N-linked (GlcNAc...) asparagine glycan is linked to Asn155. Residue Asn193 is glycosylated (N-linked (GlcNAc...) asparagine). A helical membrane pass occupies residues 226–246 (IIAGVVAGVTVVLFGILLFLF). Residues 247-613 (CKDRHKGYRR…QDAIELSGGR (367 aa)) lie on the Cytoplasmic side of the membrane. Thr287 carries the phosphothreonine modification. The 280-residue stretch at 290-569 (FSEKNVLGQG…VVRMLEGEGL (280 aa)) folds into the Protein kinase domain. 296–304 (LGQGGFGKV) is an ATP binding site. Thr313 carries the phosphothreonine modification. Residue Lys318 participates in ATP binding. Ser371 carries the phosphoserine modification. Thr390 carries the post-translational modification Phosphothreonine. The Proton acceptor role is filled by Asp417. Residues Thr450, Thr451, and Thr456 each carry the phosphothreonine modification. Position 464 is a phosphotyrosine (Tyr464). Position 466 is a phosphoserine (Ser466). A Phosphothreonine modification is found at Thr467. Ser471 is subject to Phosphoserine. A Phosphothreonine modification is found at Thr547.

It belongs to the protein kinase superfamily. Ser/Thr protein kinase family.

The protein localises to the cell membrane. The enzyme catalyses L-seryl-[protein] + ATP = O-phospho-L-seryl-[protein] + ADP + H(+). It catalyses the reaction L-threonyl-[protein] + ATP = O-phospho-L-threonyl-[protein] + ADP + H(+). In Arabidopsis thaliana (Mouse-ear cress), this protein is Probable LRR receptor-like serine/threonine-protein kinase At5g10290.